The sequence spans 260 residues: NH(3)-dependent NAD(+) synthetase (260 aa).

31-38 is a binding site for ATP; the sequence is GLSGGLDS. Residue Asp-37 coordinates Mg(2+). A deamido-NAD(+)-binding site is contributed by Arg-112. Thr-132 is an ATP binding site. Mg(2+) is bound at residue Glu-137. Residues Lys-161 and Ser-183 each contribute to the ATP site.

It belongs to the NAD synthetase family. In terms of assembly, homodimer.

The enzyme catalyses deamido-NAD(+) + NH4(+) + ATP = AMP + diphosphate + NAD(+) + H(+). The protein operates within cofactor biosynthesis; NAD(+) biosynthesis; NAD(+) from deamido-NAD(+) (ammonia route): step 1/1. In terms of biological role, catalyzes the ATP-dependent amidation of deamido-NAD to form NAD. Uses ammonia as a nitrogen source. The polypeptide is NH(3)-dependent NAD(+) synthetase (Helicobacter acinonychis (strain Sheeba)).